The primary structure comprises 172 residues: MERAIQGSDAREQAYSERWDGGCGGTITPFKLPDESPSLIEWRLHNSEESEDKDNPLGFKESWSFGKVVFKRYLRYDGTEASLHRALGSWERDTVNNAASRFLGFGQIGCTYCIRFRGSCLTISGGSRTLQRLIEMAIRTKRTMLQLTPCEVEGNVSRGSPEGTEAFKEESE.

The segment at 153–172 (EGNVSRGSPEGTEAFKEESE) is disordered.

Belongs to the tombusvirus protein p19 family. Homodimer.

Its function is as follows. Viral suppressor of RNA silencing which binds specifically to silencing RNAs (siRNAs). Acts as a molecular caliper to specifically select siRNAs based on the length of the duplex region of the RNA. In Pear latent virus (PeLV), this protein is RNA silencing suppressor p19.